The primary structure comprises 198 residues: Nascent polypeptide-associated complex subunit alpha (198 aa).

One can recognise an NAC-A/B domain in the interval 48 to 113; it reads ITRVVLKRTR…QAAAETGSVS (66 aa). Residues 159 to 198 enclose the UBA domain; sequence LEDSDIKLVMEQANVSRNKAINGLKKNDSDVVNTIMDLCK.

This sequence belongs to the NAC-alpha family. Part of the nascent polypeptide-associated complex (NAC), consisting of EGD2 and EGD1. NAC associates with ribosomes via EGD1.

The protein localises to the cytoplasm. It is found in the nucleus. In terms of biological role, component of the nascent polypeptide-associated complex (NAC), a dynamic component of the ribosomal exit tunnel, protecting the emerging polypeptides from interaction with other cytoplasmic proteins to ensure appropriate nascent protein targeting. The NAC complex also promotes mitochondrial protein import by enhancing productive ribosome interactions with the outer mitochondrial membrane and blocks the inappropriate interaction of ribosomes translating non-secretory nascent polypeptides with translocation sites in the membrane of the endoplasmic reticulum. EGD2 may also be involved in transcription regulation. The protein is Nascent polypeptide-associated complex subunit alpha (EGD2) of Yarrowia lipolytica (strain CLIB 122 / E 150) (Yeast).